The primary structure comprises 447 residues: Elongation factor 1-alpha (447 aa).

One can recognise a tr-type G domain in the interval 5-230; sequence KIHISIVVIG…DQINEPKRPS (226 aa). A G1 region spans residues 14–21; the sequence is GHVDSGKS. 14–21 lines the GTP pocket; it reads GHVDSGKS. At K55 the chain carries N6,N6-dimethyllysine. The G2 stretch occupies residues 70-74; it reads GITID. K79 bears the N6,N6,N6-trimethyllysine mark. A G3 region spans residues 91-94; it reads DAPG. Residues 91 to 95 and 153 to 156 each bind GTP; these read DAPGH and NKMD. Residues 153 to 156 are G4; that stretch reads NKMD. Residue K187 is modified to N6,N6,N6-trimethyllysine. The G5 stretch occupies residues 194 to 196; the sequence is SGF. K261 is modified (N6-methyllysine). A 5-glutamyl glycerylphosphorylethanolamine modification is found at E289. N6,N6,N6-trimethyllysine is present on K306. A 5-glutamyl glycerylphosphorylethanolamine modification is found at E362. N6,N6,N6-trimethyllysine is present on K396.

This sequence belongs to the TRAFAC class translation factor GTPase superfamily. Classic translation factor GTPase family. EF-Tu/EF-1A subfamily.

It localises to the cytoplasm. In terms of biological role, this protein promotes the GTP-dependent binding of aminoacyl-tRNA to the A-site of ribosomes during protein biosynthesis. The sequence is that of Elongation factor 1-alpha (BLT63) from Hordeum vulgare (Barley).